Here is a 488-residue protein sequence, read N- to C-terminus: Histone deacetylase 2 (488 aa).

Positions 9–322 are histone deacetylase; that stretch reads KKKVCYYYDG…WTYETAVALD (314 aa). Gly28 and Lys32 together coordinate 1D-myo-inositol 1,4,5,6-tetrakisphosphate. His142 is an active-site residue. Asp177, His179, and Asp265 together coordinate Zn(2+). Arg271 is a binding site for 1D-myo-inositol 1,4,5,6-tetrakisphosphate. A disordered region spans residues 389–488; the sequence is AVHEDSGDED…GAKSEQLSNP (100 aa). The segment covering 402–417 has biased composition (basic and acidic residues); sequence PDKRISIRASDKRIAC. Over residues 418–428 the composition is skewed to acidic residues; that stretch reads DEEFSDSEDEG. The segment covering 429 to 481 has biased composition (basic and acidic residues); the sequence is EGGRRNVADHKKGAKKARIEEDKKETEDKKADVKEEDKSKDNSGEKTDTKGAK.

It belongs to the histone deacetylase family. HD type 1 subfamily. It depends on Zn(2+) as a cofactor.

The protein resides in the nucleus. Its subcellular location is the cytoplasm. The enzyme catalyses N(6)-acetyl-L-lysyl-[histone] + H2O = L-lysyl-[histone] + acetate. The catalysed reaction is N(6)-acetyl-L-lysyl-[protein] + H2O = L-lysyl-[protein] + acetate. It catalyses the reaction N(6)-(2E)-butenoyl-L-lysyl-[protein] + H2O = (2E)-2-butenoate + L-lysyl-[protein]. It carries out the reaction N(6)-(2-hydroxyisobutanoyl)-L-lysyl-[protein] + H2O = 2-hydroxy-2-methylpropanoate + L-lysyl-[protein]. The enzyme catalyses N(6)-[(S)-lactoyl]-L-lysyl-[protein] + H2O = (S)-lactate + L-lysyl-[protein]. With respect to regulation, inositol tetraphosphate (1D-myo-inositol 1,4,5,6-tetrakisphosphate) may act as an intermolecular glue between HDAC2 and N-Cor repressor complex components. Its function is as follows. Histone deacetylase that catalyzes the deacetylation of lysine residues on the N-terminal part of the core histones (H2A, H2B, H3 and H4). Histone deacetylation gives a tag for epigenetic repression and plays an important role in transcriptional regulation, cell cycle progression and developmental events. Histone deacetylases act via the formation of large multiprotein complexes. Also deacetylates non-histone proteins. In addition to protein deacetylase activity, also acts as a protein-lysine deacylase by recognizing other acyl groups: catalyzes removal of (2E)-butenoyl (crotonyl), lactoyl (lactyl) and 2-hydroxyisobutanoyl (2-hydroxyisobutyryl) acyl groups from lysine residues, leading to protein decrotonylation, delactylation and de-2-hydroxyisobutyrylation, respectively. In Gallus gallus (Chicken), this protein is Histone deacetylase 2 (HDAC2).